The sequence spans 342 residues: Autoinducer 2 import system permease protein LsrC (342 aa).

Topologically, residues 1–13 (MLKFIQNNREITA) are periplasmic. The helical transmembrane segment at 14 to 34 (LLAVVLLFVLPGFLDRQYLSV) threads the bilayer. The Cytoplasmic segment spans residues 35-38 (QTLT). A helical membrane pass occupies residues 39-59 (MVYSSAQILILLAMGATLVML). Topologically, residues 60-69 (TRNIDVSVGS) are periplasmic. A helical transmembrane segment spans residues 70–90 (ITGMCAVLLGMLLNAGYSLPV). Residues 91–92 (AC) are Cytoplasmic-facing. A helical membrane pass occupies residues 93-113 (VATLLLGLLAGFFNGVLVAWL). A topological domain (periplasmic) is located at residue Lys-114. A helical membrane pass occupies residues 115 to 135 (IPAIVATLGTLGLYRGIMLLW). The Cytoplasmic portion of the chain corresponds to 136–154 (TGGKWIEGLPAELKQLSAP). The chain crosses the membrane as a helical span at residues 155-175 (LLFGVSAIGWLTIILVAFMAW). Topologically, residues 176-212 (LLAKTAFGRSFYVTGDNLQGARQLGVRTEAIRIVAFS) are periplasmic. The helical transmembrane segment at 213–233 (LNGCMAALAGIVFASQIGFIP) threads the bilayer. At 234–251 (NQTGTGLEMKAIAACVLG) the chain is on the cytoplasmic side. Residues 252–272 (GISLLGGSGAIIGAVLGAWFL) traverse the membrane as a helical segment. The Periplasmic segment spans residues 273–283 (TQIDSVLVLLR). Residues 284–304 (IPAWWNDFIAGMVLLAVLVFD) form a helical membrane-spanning segment. Residues 305–342 (GRLRCALERNLRRQKYARFMMPPPPVKPASSGKKREAA) lie on the Cytoplasmic side of the membrane.

It belongs to the binding-protein-dependent transport system permease family. AraH/RbsC subfamily. The complex is composed of two ATP-binding proteins (LsrA), two transmembrane proteins (LsrC and LsrD) and a solute-binding protein (LsrB).

It localises to the cell inner membrane. Functionally, part of the ABC transporter complex LsrABCD involved in autoinducer 2 (AI-2) import. Probably responsible for the translocation of the substrate across the membrane. In Escherichia coli (strain SMS-3-5 / SECEC), this protein is Autoinducer 2 import system permease protein LsrC (lsrC).